The following is a 793-amino-acid chain: MPFSKAWRSAVYPDFREQGAYINYKATKDTLHRMKEDIANPATPDELYNSLLMQKATVYKWCENKVKELQMMAEALMKASDYLSEEETPTNMSMVFSMVGSSEAKYLPPSDARRVADAITYELLRFVECRNLNTDTIEHIIARMYRYAVLGPTGDRWKNINKEYDYHALSIDEIFFMLSKVYEHVNEVESMRRDGRSSIPCGTVGSQVFDRRSVKYWVHMQDLPFVIARIIPHLPLSTFQDTYAMSKERGVPFTLGSPISSVYYDNDKFLLYHRRLERLDGATLIRMRWYGRPLDSDWNKLESKDSVFMEIKVHHEAWSGERSNKRRFALKEKDVDAYIRGDLSLKPALEKLRSKNASEAEQEKFMSLATEILTKIHAYDLKPVLRTQCQRAAFQCGLDQSIRISIDTDLRVVAEDFGLSHHWRYNGADAPLSHFPYAVVEVKLQCAENERIAPWIEELMNCRYMESVPKFSKYAHGIATLYGHTPFIKMVPYWMPQLDIDIRASTKPEYNQWDPTIGIASGCWERTTDRVIFGTGHAQTQTVGASEARFLPRTDCLRTYQRVLKAIKRGAHMNSVAPTMSPTDRPPSDEKKLTEQQELAPVVQYDTDRRHKAYTAFHLYPYCEDGVESLCFTSTGGKHVAAEVFSGLIPWQTGKRIRVPQKYDPKTLLTSERFMVKWAEQATRVGVVGLAVIRFGNSMSLPNDMVAVHSFWRANFHIVLGSLMVVVAECVLVYAYVTFKSRSRRVYARRKIRYDDRRGPVALTFVILAVILITVMMHVMVRYGPMLTGSDTF.

Over 1-684 (MPFSKAWRSA…MVKWAEQATR (684 aa)) the chain is Cytoplasmic. ATP is bound by residues Lys-215, Arg-286, Arg-288, Lys-312, Lys-325, and Arg-391. Residue Glu-441 coordinates Mn(2+). Lys-473 is an active-site residue. Residues 575–595 (SVAPTMSPTDRPPSDEKKLTE) are disordered. Positions 586-595 (PPSDEKKLTE) are enriched in basic and acidic residues. The chain crosses the membrane as a helical span at residues 685–705 (VGVVGLAVIRFGNSMSLPNDM). Residues 706-717 (VAVHSFWRANFH) are Vacuolar-facing. Residues 718–738 (IVLGSLMVVVAECVLVYAYVT) traverse the membrane as a helical segment. Residues 739 to 760 (FKSRSRRVYARRKIRYDDRRGP) are Cytoplasmic-facing. The helical transmembrane segment at 761-781 (VALTFVILAVILITVMMHVMV) threads the bilayer. Over 782 to 793 (RYGPMLTGSDTF) the chain is Vacuolar.

This sequence belongs to the VTC4 family. The VTC core complex is an integral membrane heterooligomer composed of at least the catalytic subunit vtc4 and the accessory subunits vtc1 and vtc2. vtc1 is a small membrane protein without hydrophilic domain. Vtc2 and vtc4 are related and have 2 hydrophilic domains that face the cytosol, an N-terminal SPX domain and the central core domain. The central core in vtc4 is the catalytic domain. Mn(2+) is required as a cofactor.

It is found in the acidocalcisome membrane. The enzyme catalyses [phosphate](n) + ATP = [phosphate](n+1) + ADP. With respect to regulation, activity of the enzyme is Mn(2+)-dependent and enhanced in the presence of pyrophosphate (PPi). Functionally, component of a polyphosphate synthase complex that utilizes ATP to synthesize and translocate polyphosphate to acidocalcisomes in epimastigotes, insect-stages of Trypanosoma brucei. Catalytic subunit of the vacuolar transporter chaperone (VTC) complex. The VTC complex acts as a vacuolar polyphosphate polymerase that catalyzes the synthesis of inorganic polyphosphate (polyP) via transfer of phosphate from ATP to a growing polyP chain, releasing ADP. VTC exposes its catalytic domain vtc4 to the cytosol, where the growing polyP chain winds through a tunnel-shaped pocket, integrating cytoplasmic polymer synthesis with polyP membrane translocation. The VTC complex carries 9 vacuolar transmembrane domains, which are likely to constitute the translocation channel into the organelle lumen. PolyP synthesis is tightly coupled to its transport into the vacuole lumen, in order to avoid otherwise toxic intermediates in the cytosol, and it depends on the proton gradient across the membrane, formed by V-ATPase. The VTC complex also plays a role in vacuolar membrane fusion. Essential for infection and parasite survival in the mammalian host. This chain is Vacuolar transporter chaperone complex subunit 4 (vtc4), found in Trypanosoma brucei brucei (strain 927/4 GUTat10.1).